The primary structure comprises 365 residues: Spermine synthase (365 aa).

A2 carries the post-translational modification N-acetylalanine. A Phosphoserine modification is found at S57. The region spanning R121 to K361 is the PABS domain. S-adenosyl 3-(methylsulfanyl)propylamine is bound at residue Q147. Spermidine is bound by residues Y176 and D200. Residues E219 and D254–C255 contribute to the S-adenosyl 3-(methylsulfanyl)propylamine site. D275 functions as the Proton acceptor in the catalytic mechanism. Residues Y350 and E352 each coordinate spermidine.

This sequence belongs to the spermidine/spermine synthase family. As to quaternary structure, homodimer. Dimerization is mediated through the N-terminal domain and seems to be required for activity as deletion of the N-terminal domain causes complete loss of activity.

It carries out the reaction S-adenosyl 3-(methylsulfanyl)propylamine + spermidine = spermine + S-methyl-5'-thioadenosine + H(+). It functions in the pathway amine and polyamine biosynthesis; spermine biosynthesis; spermine from spermidine: step 1/1. Catalyzes the production of spermine from spermidine and decarboxylated S-adenosylmethionine (dcSAM). The sequence is that of Spermine synthase (SMS) from Bos taurus (Bovine).